The following is a 1754-amino-acid chain: Collagen alpha-1(XVIII) chain (1754 aa).

Residues 1–23 (MAPYPCGCHILLLLFCCLAAARA) form the signal peptide. The segment at 42-104 (ATTIPEPQGP…TSAESPDAPE (63 aa)) is disordered. Polar residues predominate over residues 57 to 73 (TADTTTHVTPRNGSTEP). N-linked (GlcNAc...) asparagine glycans are attached at residues N68, N129, and N164. The interval 152-256 (LALAGPSSTP…APSQQLQRPD (105 aa)) is disordered. The segment covering 157–169 (PSSTPQENGTTLW) has biased composition (polar residues). Positions 215–253 (SGRASLSSLLGGAPPWGSLQDPDSQGLSPAAAAPSQQLQ) are enriched in low complexity. Positions 329–446 (APAGRCLPLP…TQEDGYCVLI (118 aa)) constitute an FZ domain. Intrachain disulfides connect C334/C397, C344/C390, C381/C419, C408/C443, and C412/C432. The Laminin G-like domain occupies 456-644 (EVGLLQLLGD…IAELKVRRDP (189 aa)). The interval 645 to 751 (QVSPMHCLDE…RTPGGRVKEG (107 aa)) is nonhelical region 1 (NC1). The segment at 645 to 1443 (QVSPMHCLDE…GPPGTMGASS (799 aa)) is disordered. The span at 672-681 (DARELLREET) shows a compositional bias: basic and acidic residues. T696 bears the Phosphothreonine mark. A compositionally biased stretch (polar residues) spans 717–738 (QTTVASLGAQTLPGSDSVSTWD). The segment at 752-785 (GLKGQKGEPGVPGPPGRAGPPGSPCLPGPPGLPC) is triple-helical region 1 (COL1). Positions 762–789 (VPGPPGRAGPPGSPCLPGPPGLPCPVSP) are enriched in pro residues. A nonhelical region 2 (NC2) region spans residues 786–795 (PVSPLGPAGP). The interval 796-875 (ALQTVPGPQG…QGPPGPPGPS (80 aa)) is triple-helical region 2 (COL2). A compositionally biased stretch (basic and acidic residues) spans 815–831 (TPGRDGEPGDPGEDGKP). Residues 833-846 (DTGPQGFPGTPGDV) show a composition bias toward low complexity. A compositionally biased stretch (pro residues) spans 862-874 (PPGPQGPPGPPGP). A nonhelical region 3 (NC3) region spans residues 876–899 (FRHDKLTFIDMEGSGFGGDLEALR). S889 carries O-linked (Xyl...) (chondroitin sulfate) serine glycosylation. The segment at 900–1021 (GPRGFPGPPG…PGPPGPPGPG (122 aa)) is triple-helical region 3 (COL3). The span at 904-914 (FPGPPGPPGVP) shows a compositional bias: pro residues. An N-linked (GlcNAc...) asparagine glycan is attached at N926. Residues 930–942 (VPGPAGLPGVPGR) show a composition bias toward low complexity. The span at 946-961 (PGFPGLPGPPGPPGRE) shows a compositional bias: pro residues. The segment covering 976-1003 (AGAPGHKGSKGAPGPAGARGESGLAGAP) has biased composition (low complexity). Pro residues predominate over residues 1005–1021 (PAGPPGPPGPPGPPGPG). The tract at residues 1022–1044 (LPAGFDDMEGSGGPFWSTARSAD) is nonhelical region 4 (NC4). Positions 1045-1127 (GPQGPPGLPG…PGPPGPPGPV (83 aa)) are triple-helical region 4 (COL4). Over residues 1053–1065 (PGLKGDPGVPGLP) the composition is skewed to low complexity. Residues 1095 to 1109 (KGDRGSRGEKGDPGK) are compositionally biased toward basic and acidic residues. Over residues 1117-1126 (LPGPPGPPGP) the composition is skewed to pro residues. Residues 1128–1141 (VYVSEQDGSVLSVP) form a nonhelical region 5 (NC5) region. A compositionally biased stretch (low complexity) spans 1141-1153 (PGPEGRPGFAGFP). The triple-helical region 5 (COL5) stretch occupies residues 1142–1183 (GPEGRPGFAGFPGPAGPKGNLGSKGERGSPGPKGEKGEPGSI). A nonhelical region 6 (NC6) region spans residues 1184-1196 (FSPDGGALGPAQK). The interval 1197 to 1269 (GAKGEPGFRG…PGPPGPPGTP (73 aa)) is triple-helical region 6 (COL6). The span at 1254–1268 (PGPPGPPGPPGPPGT) shows a compositional bias: pro residues. Residues 1270 to 1279 (VYDSNVFAES) are nonhelical region 7 (NC7). Residues 1280–1312 (SRPGPPGLPGNQGPPGPKGAKGEVGPPGPPGQF) are triple-helical region 7 (COL7). A compositionally biased stretch (pro residues) spans 1282–1296 (PGPPGLPGNQGPPGP). Residues 1313–1324 (PFDFLQLEAEMK) are nonhelical region 8 (NC8). Over residues 1321–1341 (AEMKGEKGDRGDAGQKGERGE) the composition is skewed to basic and acidic residues. The interval 1325-1346 (GEKGDRGDAGQKGERGEPGGGG) is triple-helical region 8 (COL8). The Cell attachment site motif lies at 1330-1332 (RGD). Residues 1347 to 1353 (FFGSSLP) are nonhelical region 9 (NC9). 3 stretches are compositionally biased toward pro residues: residues 1353-1365 (PGPP…PGPR), 1401-1414 (PPGP…PSFP), and 1424-1436 (PGPP…PGPP). The segment at 1354–1411 (GPPGPPGPPGPRGYPGIPGPKGESIRGQPGPPGPQGPPGIGYEGRQGPPGPPGPPGPP) is triple-helical region 9 (COL9). Positions 1412–1424 (SFPGPHRQTISVP) are nonhelical region 10 (NC10). Residues 1425–1442 (GPPGPPGPPGPPGTMGAS) are triple-helical region 10 (COL10). The tract at residues 1443-1754 (SGVRLWATRQ…IENSFMTASK (312 aa)) is nonhelical region 11 (NC11). The tract at residues 1456 to 1501 (GQVHEVPEGWLIFVAEQEELYVRVQNGFRKVQLEARTPLPRGTDNE) is non-collagenous domain 1 association domain. Positions 1502 to 1571 (VAALQPPVVQ…RPARPTSPPA (70 aa)) are non-collagenous domain 1 hinge region. The interval 1511-1556 (QLHDSNPYPRREHPHPTARPWRADDILASPPRLPEPQPYPGAPHHS) is disordered. The segment covering 1519 to 1535 (PRREHPHPTARPWRADD) has biased composition (basic and acidic residues). The segment covering 1541–1551 (PRLPEPQPYPG) has biased composition (pro residues). T1567 carries an O-linked (GalNAc...) threonine glycan. Residues H1572, H1574, H1582, and D1647 each contribute to the Zn(2+) site. 2 cysteine pairs are disulfide-bonded: C1604–C1744 and C1706–C1736.

It belongs to the multiplexin collagen family. Forms homotrimers. Recombinant non-collagenous domain 1 has stronger affinity to NID1, HSPG2 and laminin-1:NID1 complex and lower affinity to FBLN1 and FBLN2 than endostatin. As to quaternary structure, monomeric. Interacts with KDR/VEGFR2. Interacts with the ITGA5:ITGB1 complex. Interacts with NID1, HSPG2, laminin-1:NID1 complex, FBLN1 and FBLN2. Post-translationally, prolines at the third position of the tripeptide repeating unit (G-X-Y) of the triple-helical regions are hydroxylated. Circulating endostatins are found as sialoglycoprotein and asialoglycoprotein structures. In terms of processing, undergoes proteolytic processing by CTSL/cathepsin-L and elastase-like proteases to generate both non-collagenous domain 1 trimers and endostatin monomers. In tissue extracts (brain, skeletal muscle, heart, kidney, testis and liver) predominantly bands of approximately 38 kDa are detected; recombinant non-collagenous domain 1 shows similar mobility. In vitro, several proteolytic cleavage sites in the non-collagenous domain 1 hinge region generating different endostatin-like peptides are reported. In terms of tissue distribution, detected in placenta (at protein level). Present in multiple organs with highest levels in liver, lung and kidney.

It is found in the secreted. The protein localises to the extracellular space. It localises to the extracellular matrix. Its subcellular location is the basement membrane. Probably plays a major role in determining the retinal structure as well as in the closure of the neural tube. Its function is as follows. May regulate extracellular matrix-dependent motility and morphogenesis of endothelial and non-endothelial cells; the function requires homotrimerization and implicates MAPK signaling. Functionally, potently inhibits endothelial cell proliferation and angiogenesis. May inhibit angiogenesis by binding to the heparan sulfate proteoglycans involved in growth factor signaling. Inhibits VEGFA-induced endothelial cell proliferation and migration. Seems to inhibit VEGFA-mediated signaling by blocking the interaction of VEGFA to its receptor KDR/VEGFR2. Modulates endothelial cell migration in an integrin-dependent manner implicating integrin ITGA5:ITGB1 and to a lesser extent ITGAV:ITGB3 and ITGAV:ITGB5. May negatively regulate the activity of homotrimeric non-collagenous domain 1. This Homo sapiens (Human) protein is Collagen alpha-1(XVIII) chain.